Consider the following 798-residue polypeptide: Integrin beta-5 (798 aa).

The first 23 residues, 1–23 (MPRVPATLYACLLGLCALVPRLA), serve as a signal peptide directing secretion. The Extracellular portion of the chain corresponds to 24-719 (GLNICTSGSA…REPECGSAPN (696 aa)). In terms of domain architecture, PSI spans 27–76 (ICTSGSATSCEECLLIHPKCAWCSKEYFGNPRSITSRCDLKANLIRNGCE). Intrachain disulfides connect Cys28–Cys46, Cys36–Cys463, Cys39–Cys64, Cys49–Cys75, Cys202–Cys211, Cys259–Cys300, Cys401–Cys413, Cys433–Cys461, Cys465–Cys484, Cys476–Cys487, Cys489–Cys498, Cys500–Cys530, Cys513–Cys528, Cys522–Cys533, Cys535–Cys548, Cys550–Cys571, Cys555–Cys569, Cys563–Cys574, and Cys576–Cys585. The 243-residue stretch at 136–378 (YPVDLYYLMD…QLIINAYSSI (243 aa)) folds into the VWFA domain. Mg(2+) is bound by residues Ser147 and Ser149. 4 residues coordinate Ca(2+): Ser149, Asp152, Asp153, and Asp184. 4 residues coordinate Ca(2+): Asn242, Asp244, Pro246, and Glu247. Glu247 serves as a coordination point for Mg(2+). A glycan (N-linked (GlcNAc...) asparagine) is linked at Asn347. Position 362 (Gly362) interacts with Ca(2+). Asn460 and Asn479 each carry an N-linked (GlcNAc...) asparagine glycan. I-EGF domains are found at residues 465 to 499 (CSTG…TRCE), 500 to 549 (CQEG…PFCE), 550 to 586 (CDSF…DNCN), and 587 to 626 (CSTD…ETCE). Asn505 carries an N-linked (GlcNAc...) asparagine glycan. A glycan (N-linked (GlcNAc...) asparagine) is linked at Asn586. 9 disulfide bridges follow: Cys587/Cys610, Cys594/Cys608, Cys602/Cys613, Cys615/Cys625, Cys628/Cys631, Cys635/Cys682, Cys641/Cys661, Cys644/Cys657, and Cys690/Cys714. Residues Asn654 and Asn705 are each glycosylated (N-linked (GlcNAc...) asparagine). The helical transmembrane segment at 720-742 (AMTILLAVVGSILLIGMALLAIW) threads the bilayer. Topologically, residues 743–798 (KLLVTIHDRREFAKFQSERSRARYEMASNPLYRKPISTHTVDFAFNKFNKSYNGSV) are cytoplasmic. At Ser770 the chain carries Phosphoserine.

Belongs to the integrin beta chain family. As to quaternary structure, heterodimer of an alpha and a beta subunit. Beta-5 (ITGB5) associates with alpha-V (ITGAV). Interacts with MYO10. Interacts with DAB2. Integrin ITGAV:ITGB5 interacts with FBLN5 (via N-terminus). ITGAV:ITGB5 interacts with CCN3. Interacts with tensin TNS3; TNS3 also interacts with PEAK1, thus acting as an adapter molecule to bridge the association of PEAK1 with ITGB5.

Its subcellular location is the cell membrane. Functionally, integrin alpha-V/beta-5 (ITGAV:ITGB5) is a receptor for fibronectin. It recognizes the sequence R-G-D in its ligand. The chain is Integrin beta-5 (Itgb5) from Mus musculus (Mouse).